The chain runs to 325 residues: GMP reductase (325 aa).

Catalysis depends on cysteine 174, which acts as the Thioimidate intermediate. Residue 203 to 226 (IIADGGLRTHGDIAKSIRFGATMV) participates in NADP(+) binding.

The protein belongs to the IMPDH/GMPR family. GuaC type 2 subfamily.

It carries out the reaction IMP + NH4(+) + NADP(+) = GMP + NADPH + 2 H(+). In terms of biological role, catalyzes the irreversible NADPH-dependent deamination of GMP to IMP. It functions in the conversion of nucleobase, nucleoside and nucleotide derivatives of G to A nucleotides, and in maintaining the intracellular balance of A and G nucleotides. This is GMP reductase from Staphylococcus epidermidis (strain ATCC 35984 / DSM 28319 / BCRC 17069 / CCUG 31568 / BM 3577 / RP62A).